The chain runs to 241 residues: Pyridoxal phosphate phosphatase PHOSPHO2 (241 aa).

The active-site Nucleophile is the Asp8. The Mg(2+) site is built by Asp8 and Asp10. Asp10 serves as the catalytic Proton donor. Residues Asp19 and Asp99 each contribute to the substrate site. Asp179 provides a ligand contact to Mg(2+).

The protein belongs to the HAD-like hydrolase superfamily. PHOSPHO family. It depends on Mg(2+) as a cofactor.

It catalyses the reaction pyridoxal 5'-phosphate + H2O = pyridoxal + phosphate. Functionally, phosphatase that has high activity toward pyridoxal 5'-phosphate (PLP). Also active at much lower level toward pyrophosphate, phosphoethanolamine (PEA), phosphocholine (PCho), phospho-l-tyrosine, fructose-6-phosphate, p-nitrophenyl phosphate, and h-glycerophosphate. The protein is Pyridoxal phosphate phosphatase PHOSPHO2 (Phospho2) of Mus musculus (Mouse).